The sequence spans 322 residues: Homoserine kinase (322 aa).

An ATP-binding site is contributed by P107 to A117.

The protein belongs to the GHMP kinase family. Homoserine kinase subfamily.

The protein localises to the cytoplasm. It carries out the reaction L-homoserine + ATP = O-phospho-L-homoserine + ADP + H(+). It participates in amino-acid biosynthesis; L-threonine biosynthesis; L-threonine from L-aspartate: step 4/5. In terms of biological role, catalyzes the ATP-dependent phosphorylation of L-homoserine to L-homoserine phosphate. This Xylella fastidiosa (strain M23) protein is Homoserine kinase.